The primary structure comprises 935 residues: Coiled-coil domain-containing protein 66 (935 aa).

A compositionally biased stretch (polar residues) spans 76–96; sequence LDTSQAKPENSRLTFSPSTDK. The segment at 76-103 is disordered; it reads LDTSQAKPENSRLTFSPSTDKQYSEKDS. Thr-114 is modified (phosphothreonine). Ser-366 is modified (phosphoserine). Residues 462 to 555 are a coiled coil; the sequence is LEHQKAIMAQ…EQRIRELAQK (94 aa). Disordered regions lie at residues 470–491, 577–602, and 738–794; these read AQVE…KEEQ, TISS…DTGV, and ENLS…RTQQ. Basic and acidic residues predominate over residues 473–491; that stretch reads EENRRKKRLEEEQRKKEEQ. The segment at 567 to 935 is mediates localization to cilia, centrosomes and spindle microtubules and the interaction with PCM1, CEP290, CEP104 and CSPP1; sequence GAQVDYKAFT…NQEDNFSSSF (369 aa). The span at 590-602 shows a compositional bias: polar residues; that stretch reads DTSTASPKKDTGV. Phosphoserine is present on Ser-595. A compositionally biased stretch (basic and acidic residues) spans 752 to 782; the sequence is SHRETESESRLHLIKKVEEPLKTPSVSKERF. The span at 783–794 shows a compositional bias: polar residues; the sequence is QTSPAVKNRTQQ.

Homodimer; disulfide-linked. Interacts with CEP290. Interacts with PCM1. Interacts with ARMC9, TOGARAM1, CSPP1 and CEP104. Interacts with CDK5RAP2, CEP152, CEP192, TBG1 and PRC1. Widely expressed. Expressed in retina by rod photoreceptors but also detected in outer plexiform and ganglion cell layers (at protein level).

The protein localises to the cytoplasm. The protein resides in the cytoskeleton. It is found in the microtubule organizing center. It localises to the centrosome. Its subcellular location is the centriolar satellite. The protein localises to the cell projection. The protein resides in the cilium. It is found in the cilium basal body. It localises to the cilium axoneme. Its subcellular location is the photoreceptor inner segment. The protein localises to the photoreceptor outer segment. Functionally, microtubule-binding protein required for ciliogenesis. May function in ciliogenesis by mediating the transport of proteins like BBS4 to the cilium, but also through the organization of the centriolar satellites. Required for the assembly of signaling-competent cilia with proper structure and length. Mediates this function in part by regulating transition zone assembly and basal body recruitment of the IFT-B complex. Cooperates with the ciliopathy proteins CSPP1 and CEP104 during cilium length regulation. Plays two important roles during cell division. First, is required for mitotic progression via regulation of spindle assembly, organization and orientation, levels of spindle microtubules (MTs), kinetochore-fiber integrity, and chromosome alignment. Second, functions during cytokinesis in part by regulating assembly and organization of central spindle and midbody MTs. Plays a role in retina morphogenesis and/or homeostasis. In Mus musculus (Mouse), this protein is Coiled-coil domain-containing protein 66.